A 165-amino-acid polypeptide reads, in one-letter code: Ubiquitin-fold modifier-conjugating enzyme 1 (165 aa).

The active-site Glycyl thioester intermediate is Cys-116.

This sequence belongs to the ubiquitin-conjugating enzyme family. UFC1 subfamily.

Functionally, E2-like enzyme which forms an intermediate with UFM1 via a thioester linkage. The chain is Ubiquitin-fold modifier-conjugating enzyme 1 from Drosophila mojavensis (Fruit fly).